The primary structure comprises 893 residues: DNA gyrase subunit A (893 aa).

In terms of domain architecture, Topo IIA-type catalytic spans 35–501; that stretch reads LPDVRDGLKP…GLEDLEDEDL (467 aa). The O-(5'-phospho-DNA)-tyrosine intermediate role is filled by Tyr-123. A GyrA-box motif is present at residues 528 to 534; that stretch reads QNRGGRG. The interval 810–893 is disordered; that stretch reads VNEEDDNEEN…ASDNEEDSDE (84 aa). 2 stretches are compositionally biased toward acidic residues: residues 812 to 821 and 852 to 862; these read EEDDNEENAD and DAEMESVESPE. Positions 863 to 879 are enriched in basic and acidic residues; that stretch reads NDDRIDIRQDFMDRVNE. Residues 880 to 893 are compositionally biased toward acidic residues; sequence DIESASDNEEDSDE.

Belongs to the type II topoisomerase GyrA/ParC subunit family. Heterotetramer, composed of two GyrA and two GyrB chains. In the heterotetramer, GyrA contains the active site tyrosine that forms a transient covalent intermediate with DNA, while GyrB binds cofactors and catalyzes ATP hydrolysis.

Its subcellular location is the cytoplasm. It catalyses the reaction ATP-dependent breakage, passage and rejoining of double-stranded DNA.. In terms of biological role, a type II topoisomerase that negatively supercoils closed circular double-stranded (ds) DNA in an ATP-dependent manner to modulate DNA topology and maintain chromosomes in an underwound state. Negative supercoiling favors strand separation, and DNA replication, transcription, recombination and repair, all of which involve strand separation. Also able to catalyze the interconversion of other topological isomers of dsDNA rings, including catenanes and knotted rings. Type II topoisomerases break and join 2 DNA strands simultaneously in an ATP-dependent manner. This is DNA gyrase subunit A from Staphylococcus epidermidis (strain ATCC 12228 / FDA PCI 1200).